Consider the following 151-residue polypeptide: 6,7-dimethyl-8-ribityllumazine synthase (151 aa).

Residues F18, 49–51 (ALE), and 74–76 (CVI) each bind 5-amino-6-(D-ribitylamino)uracil. 79 to 80 (ET) is a (2S)-2-hydroxy-3-oxobutyl phosphate binding site. Residue H82 is the Proton donor of the active site. 5-amino-6-(D-ribitylamino)uracil is bound at residue N107. R121 is a binding site for (2S)-2-hydroxy-3-oxobutyl phosphate.

It belongs to the DMRL synthase family.

The catalysed reaction is (2S)-2-hydroxy-3-oxobutyl phosphate + 5-amino-6-(D-ribitylamino)uracil = 6,7-dimethyl-8-(1-D-ribityl)lumazine + phosphate + 2 H2O + H(+). Its pathway is cofactor biosynthesis; riboflavin biosynthesis; riboflavin from 2-hydroxy-3-oxobutyl phosphate and 5-amino-6-(D-ribitylamino)uracil: step 1/2. Catalyzes the formation of 6,7-dimethyl-8-ribityllumazine by condensation of 5-amino-6-(D-ribitylamino)uracil with 3,4-dihydroxy-2-butanone 4-phosphate. This is the penultimate step in the biosynthesis of riboflavin. In Bartonella tribocorum (strain CIP 105476 / IBS 506), this protein is 6,7-dimethyl-8-ribityllumazine synthase.